The chain runs to 375 residues: Succinyl-diaminopimelate desuccinylase (375 aa).

His66 provides a ligand contact to Zn(2+). Residue Asp68 is part of the active site. Asp99 provides a ligand contact to Zn(2+). Glu133 (proton acceptor) is an active-site residue. Glu134, Glu162, and His348 together coordinate Zn(2+).

The protein belongs to the peptidase M20A family. DapE subfamily. As to quaternary structure, homodimer. Requires Zn(2+) as cofactor. Co(2+) is required as a cofactor.

It catalyses the reaction N-succinyl-(2S,6S)-2,6-diaminopimelate + H2O = (2S,6S)-2,6-diaminopimelate + succinate. The protein operates within amino-acid biosynthesis; L-lysine biosynthesis via DAP pathway; LL-2,6-diaminopimelate from (S)-tetrahydrodipicolinate (succinylase route): step 3/3. Functionally, catalyzes the hydrolysis of N-succinyl-L,L-diaminopimelic acid (SDAP), forming succinate and LL-2,6-diaminopimelate (DAP), an intermediate involved in the bacterial biosynthesis of lysine and meso-diaminopimelic acid, an essential component of bacterial cell walls. In Buchnera aphidicola subsp. Acyrthosiphon pisum (strain 5A), this protein is Succinyl-diaminopimelate desuccinylase.